Here is a 157-residue protein sequence, read N- to C-terminus: Eukaryotic translation initiation factor 5A-2 (157 aa).

Ser-2 carries the N-acetylserine modification. A Phosphoserine modification is found at Ser-2. The residue at position 7 (Thr-7) is a Phosphothreonine. Lys-51 is modified (hypusine). Ser-74 carries the post-translational modification Phosphoserine. Residue Lys-86 forms a Glycyl lysine isopeptide (Lys-Gly) (interchain with G-Cter in ubiquitin) linkage.

It belongs to the eIF-5A family. In terms of assembly, homodimer. Binds to 80S ribosomes. Actively translating ribosomes show mutually exclusive binding of eIF5a (HYP2 or ANB1) and EFT1/eEF2. Interacts with DYS1 and LIA1. Lys-51 undergoes hypusination, a unique post-translational modification that consists in the addition of a butylamino group from spermidine to lysine side chain, leading to the formation of the unusual amino acid hypusine. eIF-5As are the only known proteins to undergo this modification, which is essential for their function.

Its subcellular location is the cytoplasm. Functionally, translation factor that promotes translation elongation and termination, particularly upon ribosome stalling at specific amino acid sequence contexts. Binds between the exit (E) and peptidyl (P) site of the ribosome and promotes rescue of stalled ribosome: specifically required for efficient translation of polyproline-containing peptides as well as other motifs that stall the ribosome. Acts as ribosome quality control (RQC) cofactor by joining the RQC complex to facilitate peptidyl transfer during CAT tailing step. Involved in actin dynamics and cell cycle progression, mRNA decay and probably in a pathway involved in stress response and maintenance of cell wall integrity. This Saccharomyces cerevisiae (strain ATCC 204508 / S288c) (Baker's yeast) protein is Eukaryotic translation initiation factor 5A-2 (ANB1).